The chain runs to 363 residues: FMNH(2)-dependent dimethylsulfone monooxygenase (363 aa).

This sequence belongs to the SsuD family.

It carries out the reaction dimethyl sulfone + FMNH2 + O2 = methanesulfinate + FMN + formaldehyde + H2O + 2 H(+). Functionally, involved in the dimethyl sulfide degradation pathway. Catalyzes the oxidation of dimethylsulfone (DMSO2) to yield methanesulfinate, which is oxidized spontaneously to methanesulfonate in the presence of dioxygen and FMNH(2). The protein is FMNH(2)-dependent dimethylsulfone monooxygenase of Pseudomonas putida (Arthrobacter siderocapsulatus).